The chain runs to 198 residues: MSTAVQVDDVMRYRDSRFQTIAAKLLPTQYLVVDDDTALTTTLGSCVAACLRDPVLKIGGMNHFLLPEGQVGDGAPTRYGSYAMELLINDMLKRGAHRKRIEAKVFGGANVLKGFTSNPVGTRNAEFVRQYLQAEHIPIIAEDLCGIHPRKVWFFATTGRVVVQRLPHAHEAEVAATESAVRARLSKAPVTGGVELFE.

This sequence belongs to the CheD family.

It catalyses the reaction L-glutaminyl-[protein] + H2O = L-glutamyl-[protein] + NH4(+). In terms of biological role, probably deamidates glutamine residues to glutamate on methyl-accepting chemotaxis receptors (MCPs), playing an important role in chemotaxis. This Xanthomonas axonopodis pv. citri (strain 306) protein is Probable chemoreceptor glutamine deamidase CheD.